A 384-amino-acid chain; its full sequence is Guanine nucleotide-binding protein alpha-1 subunit (384 aa).

Gly-2 carries the N-myristoyl glycine lipid modification. Cys-5 carries the S-palmitoyl cysteine lipid modification. Positions 38-384 constitute a G-alpha domain; that stretch reads HIRKLLLLGA…RRNLFEAGLL (347 aa). Residues 41–54 form a G1 motif region; it reads KLLLLGAGESGKST. GTP contacts are provided by Glu-49, Ser-50, Gly-51, Lys-52, Ser-53, Thr-54, Asp-163, Leu-188, Thr-194, Gly-222, Asn-288, Lys-289, Asp-291, and Ala-356. A Mg(2+)-binding site is contributed by Ser-53. Positions 186–194 are G2 motif; the sequence is DVLLARVRT. Position 194 (Thr-194) interacts with Mg(2+). The tract at residues 215–224 is G3 motif; it reads YRLFDVGGQR. The tract at residues 284–291 is G4 motif; the sequence is MLFLNKFD. A G5 motif region spans residues 354–359; the sequence is TTALDQ.

This sequence belongs to the G-alpha family. In terms of assembly, g proteins are composed of 3 units; alpha, beta and gamma. The alpha chain contains the guanine nucleotide binding site. Mg(2+) is required as a cofactor.

In terms of biological role, guanine nucleotide-binding proteins (G proteins) are involved as modulators or transducers in various transmembrane signaling systems. The chain is Guanine nucleotide-binding protein alpha-1 subunit (GPA1) from Pisum sativum (Garden pea).